The sequence spans 293 residues: 4-hydroxy-tetrahydrodipicolinate synthase (293 aa).

Residue threonine 45 coordinates pyruvate. Tyrosine 133 functions as the Proton donor/acceptor in the catalytic mechanism. The active-site Schiff-base intermediate with substrate is the lysine 161. Isoleucine 203 contacts pyruvate.

The protein belongs to the DapA family. In terms of assembly, homotetramer; dimer of dimers.

The protein resides in the cytoplasm. It catalyses the reaction L-aspartate 4-semialdehyde + pyruvate = (2S,4S)-4-hydroxy-2,3,4,5-tetrahydrodipicolinate + H2O + H(+). The protein operates within amino-acid biosynthesis; L-lysine biosynthesis via DAP pathway; (S)-tetrahydrodipicolinate from L-aspartate: step 3/4. Catalyzes the condensation of (S)-aspartate-beta-semialdehyde [(S)-ASA] and pyruvate to 4-hydroxy-tetrahydrodipicolinate (HTPA). In Aliivibrio fischeri (strain ATCC 700601 / ES114) (Vibrio fischeri), this protein is 4-hydroxy-tetrahydrodipicolinate synthase.